The sequence spans 182 residues: Putative manganese efflux pump MntP (182 aa).

6 helical membrane-spanning segments follow: residues 6-26, 37-57, 71-91, 101-121, 131-151, and 162-182; these read LIPLIIMAFALGMDAFSVSLG, ILYIGVTIGIFHIIMPFIGMV, HFAGAILLIGLGFYIVYSSIL, IGISLFVFAFGVSIDSFSVGL, VITILLFGFISMLLAWTGLFI, and YGEIVGGIILVGFGLYLLFPI.

The protein belongs to the MntP (TC 9.B.29) family.

Its subcellular location is the cell membrane. Probably functions as a manganese efflux pump. The sequence is that of Putative manganese efflux pump MntP from Bacillus cereus (strain Q1).